The primary structure comprises 158 residues: Small ribosomal subunit protein eS10 (158 aa).

Residues 99 to 158 (ETVRRGAVGRPDAPARSAEDRSAYRRAPTTPAAHDKKADVGPGSADLEFRGGFGRGRPAP) form a disordered region. The span at 149–158 (GGFGRGRPAP) shows a compositional bias: gly residues.

The protein belongs to the eukaryotic ribosomal protein eS10 family.

Its subcellular location is the cytoplasm. This is Small ribosomal subunit protein eS10 (RpS10) from Spodoptera frugiperda (Fall armyworm).